Reading from the N-terminus, the 65-residue chain is MMERIQELLEQIVKWLIFTILLVASISLIVVYQQGYIAEALVARATPLAIVVGLSAIAAAIIVKK.

Transmembrane regions (helical) follow at residues 12 to 31 (IVKW…LIVV) and 41 to 63 (LVAR…AIIV).

Its subcellular location is the cell membrane. This is an uncharacterized protein from Halalkalibacterium halodurans (strain ATCC BAA-125 / DSM 18197 / FERM 7344 / JCM 9153 / C-125) (Bacillus halodurans).